The primary structure comprises 151 residues: Transcriptional regulator MraZ (151 aa).

2 consecutive SpoVT-AbrB domains span residues 5-52 (IHQV…PLSE) and 81-124 (ATDL…SQEE).

This sequence belongs to the MraZ family. Forms oligomers.

Its subcellular location is the cytoplasm. It localises to the nucleoid. This Marinomonas sp. (strain MWYL1) protein is Transcriptional regulator MraZ.